Reading from the N-terminus, the 679-residue chain is Stress-70 protein, mitochondrial (679 aa).

Residues 1-46 (MISASRAAAARLVGTTASRSPAAARHQDGWNGLSHEAFRFVSRRDY) constitute a mitochondrion transit peptide. The segment at 1-432 (MISASRAAAA…IQGGVLAGDV (432 aa)) is interaction with NFS1. Residues threonine 63 and asparagine 64 each contribute to the ADP site. The tract at residues 63-431 (TNSCVAVMEG…AIQGGVLAGD (369 aa)) is nucleotide-binding domain (NBD). An N6-acetyllysine modification is found at lysine 76. Position 87 is a phosphothreonine (threonine 87). Lysine 135 and lysine 138 each carry N6-acetyllysine; alternate. Lysine 135 and lysine 138 each carry N6-succinyllysine; alternate. Residue lysine 143 is modified to N6-acetyllysine. Lysine 206 is subject to N6-acetyllysine; alternate. Residue lysine 206 is modified to N6-succinyllysine; alternate. Lysine 206 is subject to N6-malonyllysine; alternate. N6-acetyllysine is present on residues lysine 234 and lysine 288. An N6-acetyllysine; alternate modification is found at lysine 300. Lysine 300 carries the N6-succinyllysine; alternate modification. ADP-binding residues include glutamate 313, lysine 316, and serine 320. An N6-acetyllysine; alternate modification is found at lysine 360. Lysine 360 carries the post-translational modification N6-succinyllysine; alternate. At lysine 368 the chain carries N6-succinyllysine. 2 residues coordinate ADP: glycine 388 and arginine 391. N6-succinyllysine is present on lysine 394. Phosphoserine is present on serine 408. The tract at residues 432–441 (VTDVLLLDVT) is interdomain linker. Residues 432–679 (VTDVLLLDVT…QKEDQKEEKQ (248 aa)) form an interaction with FXN and ISCU region. The segment at 442-679 (PLSLGIETLG…QKEDQKEEKQ (238 aa)) is substrate-binding domain (SBD). At arginine 513 the chain carries Omega-N-methylarginine. Lysine 567 and lysine 600 each carry N6-acetyllysine; alternate. 2 positions are modified to N6-succinyllysine; alternate: lysine 567 and lysine 600. The residue at position 610 (lysine 610) is an N6-succinyllysine. N6-acetyllysine is present on lysine 612. Lysine 646 bears the N6-acetyllysine; alternate mark. Position 646 is an N6-succinyllysine; alternate (lysine 646). The tract at residues 655–679 (MASEREGSGSSSTGEQKEDQKEEKQ) is disordered. Residues 669–679 (EQKEDQKEEKQ) are compositionally biased toward basic and acidic residues.

Belongs to the heat shock protein 70 family. In terms of assembly, interacts strongly with the intermediate form of FXN and weakly with its mature form. Interacts with HSCB. Associates with the mitochondrial contact site and cristae organizing system (MICOS) complex, composed of at least MICOS10/MIC10, CHCHD3/MIC19, CHCHD6/MIC25, APOOL/MIC27, IMMT/MIC60, APOO/MIC23/MIC26 and QIL1/MIC13. This complex was also known under the names MINOS or MitOS complex. The MICOS complex associates with mitochondrial outer membrane proteins SAMM50, MTX1, MTX2 and DNAJC11, mitochondrial inner membrane protein TMEM11 and with HSPA9. Interacts with DNLZ, the interaction is required to prevent self-aggregation. Interacts with TESPA1. Interacts with PDPN. Interacts with NFU1, NFS1 and ISCU. Interacts with TP53; the interaction promotes TP53 degradation. Interacts (via SBD domain) with UBXN2A; the interaction with UBXN2A inhibits HSPA9 interaction with and degradation of TP53, thereby promotes TP53 translocation to the nucleus. Interacts with ITPR1 AND VDAC1; this interaction couples ITPR1 to VDAC1. Component of the TIM23 mitochondrial inner membrane pre-sequence translocase complex.

Its subcellular location is the mitochondrion. It is found in the nucleus. The protein localises to the nucleolus. The protein resides in the cytoplasm. It localises to the mitochondrion matrix. The enzyme catalyses ATP + H2O = ADP + phosphate + H(+). With respect to regulation, the chaperone activity is regulated by ATP-induced allosteric coupling of the nucleotide-binding (NBD) and substrate-binding (SBD) domains. ATP binding in the nucleotide-binding pocket (NBP) leads to a conformational change in the NBD, which is transferred through the interdomain linker (IDL) to the substrate-binding domain (SBD). This elicits a reduced substrate affinity and a faster substrate exchange rate. Upon hydrolysis of ATP to ADP, the protein undergoes a conformational change that increases its affinity for substrate proteins. It cycles through repeated phases of ATP hydrolysis and nucleotide exchange, facilitating repeated cycles of substrate binding and release. Functions in collaboration with co-chaperones. Functions with the co-chaperone, DNLZ, to maintain solubility and regulate ATP hydrolysis. Nucleotide exchange factors, GRPEL1 and GRPEL2, accelerate nucleotide exchange. Functionally, mitochondrial chaperone that plays a key role in mitochondrial protein import, folding, and assembly. Plays an essential role in the protein quality control system, the correct folding of proteins, the re-folding of misfolded proteins, and the targeting of proteins for subsequent degradation. These processes are achieved through cycles of ATP binding, ATP hydrolysis, and ADP release, mediated by co-chaperones. In mitochondria, it associates with the TIM (translocase of the inner membrane) protein complex to assist in the import and folding of mitochondrial proteins. Plays an important role in mitochondrial iron-sulfur cluster (ISC) biogenesis, interacts with and stabilizes ISC cluster assembly proteins FXN, NFU1, NFS1 and ISCU. Regulates erythropoiesis via stabilization of ISC assembly. Regulates mitochondrial calcium-dependent apoptosis by coupling two calcium channels, ITPR1 and VDAC1, at the mitochondria-associated endoplasmic reticulum (ER) membrane to facilitate calcium transport from the ER lumen to the mitochondria intermembrane space, providing calcium for the downstream calcium channel MCU, which releases it into the mitochondrial matrix. Although primarily located in the mitochondria, it is also found in other cellular compartments. In the cytosol, it associates with proteins involved in signaling, apoptosis, or senescence. It may play a role in cell cycle regulation via its interaction with and promotion of degradation of TP53. May play a role in the control of cell proliferation and cellular aging. Protects against reactive oxygen species (ROS). Extracellular HSPA9 plays a cytoprotective role by preventing cell lysis following immune attack by the membrane attack complex by disrupting formation of the complex. The chain is Stress-70 protein, mitochondrial from Rattus norvegicus (Rat).